A 206-amino-acid chain; its full sequence is Type III pantothenate kinase (206 aa).

Residue 5 to 12 (DIGNSTAK) participates in ATP binding. Substrate is bound by residues Tyr-67 and 72–75 (GVDR). Asp-74 functions as the Proton acceptor in the catalytic mechanism. Position 89 (Asp-89) interacts with K(+). Ser-92 is a binding site for ATP. Thr-144 provides a ligand contact to substrate.

It belongs to the type III pantothenate kinase family. As to quaternary structure, homodimer. The cofactor is NH4(+). It depends on K(+) as a cofactor.

Its subcellular location is the cytoplasm. It carries out the reaction (R)-pantothenate + ATP = (R)-4'-phosphopantothenate + ADP + H(+). It functions in the pathway cofactor biosynthesis; coenzyme A biosynthesis; CoA from (R)-pantothenate: step 1/5. Catalyzes the phosphorylation of pantothenate (Pan), the first step in CoA biosynthesis. The polypeptide is Type III pantothenate kinase (Campylobacter hominis (strain ATCC BAA-381 / DSM 21671 / CCUG 45161 / LMG 19568 / NCTC 13146 / CH001A)).